Reading from the N-terminus, the 373-residue chain is Putative F-box/kelch-repeat protein At5g24040 (373 aa).

In terms of domain architecture, F-box spans 2-50 (VKWSELPPEILHLISLKIDNPFDLIHFRSVCSFWRSSSLLKFRHMTSLR). Kelch repeat units lie at residues 165–207 (NEYM…PFKG) and 262–308 (YDFH…CTFS).

This chain is Putative F-box/kelch-repeat protein At5g24040, found in Arabidopsis thaliana (Mouse-ear cress).